Reading from the N-terminus, the 355-residue chain is Protein RecA (355 aa).

72 to 79 contacts ATP; that stretch reads GPESSGKT.

This sequence belongs to the RecA family.

The protein resides in the cytoplasm. Can catalyze the hydrolysis of ATP in the presence of single-stranded DNA, the ATP-dependent uptake of single-stranded DNA by duplex DNA, and the ATP-dependent hybridization of homologous single-stranded DNAs. It interacts with LexA causing its activation and leading to its autocatalytic cleavage. The protein is Protein RecA of Thermosynechococcus vestitus (strain NIES-2133 / IAM M-273 / BP-1).